The chain runs to 454 residues: Ribosomal protein uS12 methylthiotransferase RimO (454 aa).

Residues 14-125 (SKIAFSHVGC…IAKVLDRVEK (112 aa)) form the MTTase N-terminal domain. 6 residues coordinate [4Fe-4S] cluster: C23, C59, C88, C163, C167, and C170. The region spanning 149-378 (DKNKFVAYLR…ISVQQNISRE (230 aa)) is the Radical SAM core domain. The TRAM domain maps to 381–452 (QIYVGSKMKI…EYDLYGETIK (72 aa)).

The protein belongs to the methylthiotransferase family. RimO subfamily. The cofactor is [4Fe-4S] cluster.

It is found in the cytoplasm. It catalyses the reaction L-aspartate(89)-[ribosomal protein uS12]-hydrogen + (sulfur carrier)-SH + AH2 + 2 S-adenosyl-L-methionine = 3-methylsulfanyl-L-aspartate(89)-[ribosomal protein uS12]-hydrogen + (sulfur carrier)-H + 5'-deoxyadenosine + L-methionine + A + S-adenosyl-L-homocysteine + 2 H(+). Its function is as follows. Catalyzes the methylthiolation of an aspartic acid residue of ribosomal protein uS12. In Prochlorococcus marinus (strain MIT 9301), this protein is Ribosomal protein uS12 methylthiotransferase RimO.